Reading from the N-terminus, the 213-residue chain is Protein-L-isoaspartate O-methyltransferase (213 aa).

Residue Ser64 is part of the active site.

It belongs to the methyltransferase superfamily. L-isoaspartyl/D-aspartyl protein methyltransferase family.

The protein localises to the cytoplasm. The enzyme catalyses [protein]-L-isoaspartate + S-adenosyl-L-methionine = [protein]-L-isoaspartate alpha-methyl ester + S-adenosyl-L-homocysteine. Functionally, catalyzes the methyl esterification of L-isoaspartyl residues in peptides and proteins that result from spontaneous decomposition of normal L-aspartyl and L-asparaginyl residues. It plays a role in the repair and/or degradation of damaged proteins. The chain is Protein-L-isoaspartate O-methyltransferase from Christiangramia forsetii (strain DSM 17595 / CGMCC 1.15422 / KT0803) (Gramella forsetii).